A 297-amino-acid chain; its full sequence is CASP-like protein 4A2 (297 aa).

Over residues Met1–Pro20 the composition is skewed to polar residues. Positions Met1 to Thr135 are disordered. Topologically, residues Met1–Thr149 are cytoplasmic. The span at Leu69 to Pro83 shows a compositional bias: pro residues. The helical transmembrane segment at Ala150–Ala170 threads the bilayer. At Asp171–Leu191 the chain is on the extracellular side. Residues Ala192 to Ile212 form a helical membrane-spanning segment. Residues Ala213–Asp225 are Cytoplasmic-facing. Residues Leu226 to Ala246 traverse the membrane as a helical segment. At Ala247 to Met265 the chain is on the extracellular side. Residues Ala266–Ile286 traverse the membrane as a helical segment. Topologically, residues Ser287 to Ser297 are cytoplasmic.

Belongs to the Casparian strip membrane proteins (CASP) family. In terms of assembly, homodimer and heterodimers.

The protein localises to the cell membrane. This Arabidopsis thaliana (Mouse-ear cress) protein is CASP-like protein 4A2.